We begin with the raw amino-acid sequence, 229 residues long: Large ribosomal subunit protein uL1 (229 aa).

Belongs to the universal ribosomal protein uL1 family. Part of the 50S ribosomal subunit.

Functionally, binds directly to 23S rRNA. The L1 stalk is quite mobile in the ribosome, and is involved in E site tRNA release. Protein L1 is also a translational repressor protein, it controls the translation of the L11 operon by binding to its mRNA. The polypeptide is Large ribosomal subunit protein uL1 (Lactococcus lactis subsp. lactis (strain IL1403) (Streptococcus lactis)).